Here is a 567-residue protein sequence, read N- to C-terminus: DNA ligase B (567 aa).

Residue K126 is the N6-AMP-lysine intermediate of the active site.

The protein belongs to the NAD-dependent DNA ligase family. LigB subfamily.

It catalyses the reaction NAD(+) + (deoxyribonucleotide)n-3'-hydroxyl + 5'-phospho-(deoxyribonucleotide)m = (deoxyribonucleotide)n+m + AMP + beta-nicotinamide D-nucleotide.. Catalyzes the formation of phosphodiester linkages between 5'-phosphoryl and 3'-hydroxyl groups in double-stranded DNA using NAD as a coenzyme and as the energy source for the reaction. The sequence is that of DNA ligase B from Pseudomonas putida (strain W619).